A 21-amino-acid chain; its full sequence is Thioredoxin (21 aa).

An N6-acetyllysine modification is found at Lys3. Lys8 carries the post-translational modification N6-succinyllysine.

Belongs to the thioredoxin family. As to quaternary structure, homodimer; disulfide-linked. Interacts with TXNIP through the redox-active site. Interacts with MAP3K5 and CASP3. Interacts with APEX1; the interaction stimulates the FOS/JUN AP-1 DNA-binding activity in a redox-dependent manner.

The protein localises to the nucleus. It localises to the cytoplasm. The protein resides in the secreted. Participates in various redox reactions through the reversible oxidation of its active center dithiol to a disulfide and catalyzes dithiol-disulfide exchange reactions. Plays a role in the reversible S-nitrosylation of cysteine residues in target proteins, and thereby contributes to the response to intracellular nitric oxide. Nitrosylates the active site Cys of CASP3 in response to nitric oxide (NO), and thereby inhibits caspase-3 activity. Induces the FOS/JUN AP-1 DNA binding activity in ionizing radiation (IR) cells through its oxidation/reduction status and stimulates AP-1 transcriptional activity. This Canis lupus familiaris (Dog) protein is Thioredoxin (TXN).